The chain runs to 411 residues: MSDSVILALGIAAFTVIVLVLVAIILFAKSKLVDSGDITIDINDDPEKAITLPAGGKLLGALASKGIFVSSACGGGGSCGQCIVKVKNGGGEILPTELSHINKREAKEGYRLACQVNVKGNMEVELPEEIFGVKKWECTVISNDNKATFIKELKLAIPEGEEVPFRAGGYIQIEAEPHVVNYKDFDIPEEYHEDWDKYDLWRYVSKVDEHIIRAYSMASYPEEKGIIMLNVRIATPPPRQPDAPPGQMSSYIWSLKAGDKVTISGPFGEFFAKETNAEMVFIGGGAGMAPMRSHIFDQLKRLHSKRKMSFWYGARSKREIFYQEDFDQLQAENPNFVWHVALSDALPEDNWTGYTGFIHNVLYENYLKNHEAPEDCEYYMCGPPVMNAAVIKMLKDLGVEDENILLDDFGG.

The helical transmembrane segment at 5-25 (VILALGIAAFTVIVLVLVAII) threads the bilayer. Residues 36–130 (GDITIDINDD…NMEVELPEEI (95 aa)) form the 2Fe-2S ferredoxin-type domain. [2Fe-2S] cluster-binding residues include cysteine 73, cysteine 79, cysteine 82, and cysteine 114. The FAD-binding FR-type domain maps to 133 to 273 (VKKWECTVIS…SGPFGEFFAK (141 aa)).

It belongs to the NqrF family. In terms of assembly, composed of six subunits; NqrA, NqrB, NqrC, NqrD, NqrE and NqrF. Requires [2Fe-2S] cluster as cofactor. The cofactor is FAD.

The protein localises to the cell inner membrane. It catalyses the reaction a ubiquinone + n Na(+)(in) + NADH + H(+) = a ubiquinol + n Na(+)(out) + NAD(+). NQR complex catalyzes the reduction of ubiquinone-1 to ubiquinol by two successive reactions, coupled with the transport of Na(+) ions from the cytoplasm to the periplasm. The first step is catalyzed by NqrF, which accepts electrons from NADH and reduces ubiquinone-1 to ubisemiquinone by a one-electron transfer pathway. This chain is Na(+)-translocating NADH-quinone reductase subunit F, found in Haemophilus influenzae (strain 86-028NP).